The chain runs to 82 residues: Defensin-like protein 7 (82 aa).

The N-terminal stretch at methionine 1–glycine 29 is a signal peptide. The residue at position 30 (glutamine 30) is a Pyrrolidone carboxylic acid. Intrachain disulfides connect cysteine 33–cysteine 77, cysteine 44–cysteine 64, cysteine 50–cysteine 71, and cysteine 54–cysteine 73.

It belongs to the DEFL family. As to expression, expressed in stems, roots, rosette leaves and flower buds.

It is found in the secreted. The polypeptide is Defensin-like protein 7 (LCR75) (Arabidopsis thaliana (Mouse-ear cress)).